We begin with the raw amino-acid sequence, 285 residues long: UPF0354 protein SACOL1793 (285 aa).

Belongs to the UPF0354 family.

This Staphylococcus aureus (strain COL) protein is UPF0354 protein SACOL1793.